The sequence spans 334 residues: Ornithine carbamoyltransferase (334 aa).

Residues 57-60 (STRT), Q84, R108, and 135-138 (HPTQ) contribute to the carbamoyl phosphate site. L-ornithine is bound by residues N168, D233, and 237 to 238 (SM). Carbamoyl phosphate-binding positions include 275–276 (CL) and R320.

It belongs to the aspartate/ornithine carbamoyltransferase superfamily. OTCase family.

It is found in the cytoplasm. The catalysed reaction is carbamoyl phosphate + L-ornithine = L-citrulline + phosphate + H(+). It participates in amino-acid biosynthesis; L-arginine biosynthesis; L-arginine from L-ornithine and carbamoyl phosphate: step 1/3. Reversibly catalyzes the transfer of the carbamoyl group from carbamoyl phosphate (CP) to the N(epsilon) atom of ornithine (ORN) to produce L-citrulline. This Thermobifida fusca (strain YX) protein is Ornithine carbamoyltransferase.